The following is a 502-amino-acid chain: Glycerol kinase (502 aa).

Residue Thr14 coordinates ADP. Thr14, Thr15, and Ser16 together coordinate ATP. Thr14 is a sn-glycerol 3-phosphate binding site. An ADP-binding site is contributed by Arg18. Positions 84, 85, 136, and 246 each coordinate sn-glycerol 3-phosphate. Glycerol is bound by residues Arg84, Glu85, Tyr136, Asp246, and Gln247. ADP is bound by residues Thr268 and Gly311. Positions 268, 311, 315, and 412 each coordinate ATP. The ADP site is built by Gly412 and Asn416.

Belongs to the FGGY kinase family. Homotetramer and homodimer (in equilibrium). Heterodimer with EIIA-Glc. Binds 1 zinc ion per glycerol kinase EIIA-Glc dimer. The zinc ion is important for dimerization.

It carries out the reaction glycerol + ATP = sn-glycerol 3-phosphate + ADP + H(+). It functions in the pathway polyol metabolism; glycerol degradation via glycerol kinase pathway; sn-glycerol 3-phosphate from glycerol: step 1/1. Its activity is regulated as follows. Activity of this regulatory enzyme is affected by several metabolites. Allosterically and non-competitively inhibited by fructose 1,6-bisphosphate (FBP) and unphosphorylated phosphocarrier protein EIIA-Glc (III-Glc), an integral component of the bacterial phosphotransferase (PTS) system. Key enzyme in the regulation of glycerol uptake and metabolism. Catalyzes the phosphorylation of glycerol to yield sn-glycerol 3-phosphate. The polypeptide is Glycerol kinase (Shigella flexneri).